A 150-amino-acid polypeptide reads, in one-letter code: Large ribosomal subunit protein bL9 (150 aa).

This sequence belongs to the bacterial ribosomal protein bL9 family.

In terms of biological role, binds to the 23S rRNA. This is Large ribosomal subunit protein bL9 from Janthinobacterium sp. (strain Marseille) (Minibacterium massiliensis).